The sequence spans 309 residues: MEEFLTVGLWGGEGGDRWSFVVNNGGIIGMEIVHANGIASITFKCGDEYGVLQHSRKFGGTGEGWKTDKISLNWPEEYLTSISGTVADLWQHIIIRSISFKTNKGTEYGPYGVVTGQPFSYSTEGGVIVGFHGRSGTLLDAIGAYVKIPQKKDNTLKMALPVPRGPGPWGGHGGMEWDDGVFPAIRELHLYVGDSVIHAIRVSYQSKDGEPLLSPKHGGEGGEPIDPIKLEVSKEFLIRIAGFYGPVEGSGSFKALRSITFYTNKAKYGPYGDEIGQAFTSSVAPGRVVGFHGRSGAYLDAIGVHMEYF.

The residue at position 1 (Met-1) is an N-acetylmethionine. Jacalin-type lectin domains are found at residues 4–148 and 163–308; these read FLTV…YVKI and PRGP…HMEY.

The protein belongs to the jacalin lectin family.

Functionally, D-mannose/D-glucose-binding lectin. Binds N-linked high-mannose-type glycans. Has a preference for smaller (Man(2)-Man(6)) high-mannose-type glycans to larger (Man(7)-Man(9)) ones. Recognizes both alpha1-6 extended and alpha1-3 extended monoantennary glycans. The addition of alpha1-2Man to the Man-alpha1-3Man-beta branch results in a significant loss of affinity, but beta1-2GlcNAc has some affinity. Has less affinity for biantennary glycans, and affinity is very weak for the biantennary complex-type N-glycans with bisecting GlcNAc. No affinity is observed for tri- and tetra-antennary glycans. Has mitogenic and hemagglutinating activities. This Castanea crenata (Japanese chestnut) protein is Agglutinin.